The sequence spans 212 residues: Ribonuclease HII (212 aa).

Residues 18–212 form the RNase H type-2 domain; it reads GCVFGVDEAG…APVAQQELFR (195 aa). Residues aspartate 24, glutamate 25, and aspartate 118 each contribute to the a divalent metal cation site.

This sequence belongs to the RNase HII family. Mn(2+) is required as a cofactor. Requires Mg(2+) as cofactor.

It localises to the cytoplasm. The enzyme catalyses Endonucleolytic cleavage to 5'-phosphomonoester.. Endonuclease that specifically degrades the RNA of RNA-DNA hybrids. This is Ribonuclease HII from Erythrobacter litoralis (strain HTCC2594).